Reading from the N-terminus, the 192-residue chain is MYQDLIHNELNEAAETLANFLKDDANIHAIQRAAVLLADSFKAGGKVLSCGNGGSHCDAMHFAEELTGRYRENRPGYPAIAISDVSHISCVSNDFGYDYIFSRYVEAVGREGDVLLGISTSGNSGNVIKAIAAAREKGMKVITLTGKDGGKMAGTADIEIRVPHFGYADRIQEIHIKVIHILIQLIEKEMVK.

The region spanning 37 to 192 (LADSFKAGGK…IQLIEKEMVK (156 aa)) is the SIS domain. Residue 52 to 54 (NGG) participates in substrate binding. Residues His-61 and Glu-65 each coordinate Zn(2+). Substrate-binding positions include Glu-65, 93–94 (ND), 119–121 (STS), Ser-124, and Gln-172. Zn(2+)-binding residues include Gln-172 and His-180.

The protein belongs to the SIS family. GmhA subfamily. In terms of assembly, homotetramer. Zn(2+) is required as a cofactor.

The protein localises to the cytoplasm. The catalysed reaction is 2 D-sedoheptulose 7-phosphate = D-glycero-alpha-D-manno-heptose 7-phosphate + D-glycero-beta-D-manno-heptose 7-phosphate. It participates in carbohydrate biosynthesis; D-glycero-D-manno-heptose 7-phosphate biosynthesis; D-glycero-alpha-D-manno-heptose 7-phosphate and D-glycero-beta-D-manno-heptose 7-phosphate from sedoheptulose 7-phosphate: step 1/1. Functionally, catalyzes the isomerization of sedoheptulose 7-phosphate in D-glycero-D-manno-heptose 7-phosphate. The sequence is that of Phosphoheptose isomerase from Salmonella dublin (strain CT_02021853).